The chain runs to 115 residues: MMKGQIAGLMKQAQQMQENMKKAQEQLALIEVEGVSGAGLVKVVMTCKNDVKRVSIDPSLLAEGEDKDLLEDLIAAAFNDAVRKAEATTQEKMGSLTSGLGGMAGMLPPGFKLPF.

The protein belongs to the YbaB/EbfC family. As to quaternary structure, homodimer.

It is found in the cytoplasm. It localises to the nucleoid. Functionally, binds to DNA and alters its conformation. May be involved in regulation of gene expression, nucleoid organization and DNA protection. The sequence is that of Nucleoid-associated protein Rpic_1036 from Ralstonia pickettii (strain 12J).